Consider the following 103-residue polypeptide: Co-chaperonin GroES (103 aa).

The protein belongs to the GroES chaperonin family. In terms of assembly, heptamer of 7 subunits arranged in a ring. Interacts with the chaperonin GroEL.

The protein resides in the cytoplasm. Together with the chaperonin GroEL, plays an essential role in assisting protein folding. The GroEL-GroES system forms a nano-cage that allows encapsulation of the non-native substrate proteins and provides a physical environment optimized to promote and accelerate protein folding. GroES binds to the apical surface of the GroEL ring, thereby capping the opening of the GroEL channel. In Prochlorococcus marinus (strain MIT 9515), this protein is Co-chaperonin GroES.